Consider the following 518-residue polypeptide: Bifunctional purine biosynthesis protein PurH (518 aa).

Residues 1–144 form the MGS-like domain; sequence MSKRALISVS…KNHAAVTVVC (144 aa).

It belongs to the PurH family.

The enzyme catalyses (6R)-10-formyltetrahydrofolate + 5-amino-1-(5-phospho-beta-D-ribosyl)imidazole-4-carboxamide = 5-formamido-1-(5-phospho-D-ribosyl)imidazole-4-carboxamide + (6S)-5,6,7,8-tetrahydrofolate. It catalyses the reaction IMP + H2O = 5-formamido-1-(5-phospho-D-ribosyl)imidazole-4-carboxamide. Its pathway is purine metabolism; IMP biosynthesis via de novo pathway; 5-formamido-1-(5-phospho-D-ribosyl)imidazole-4-carboxamide from 5-amino-1-(5-phospho-D-ribosyl)imidazole-4-carboxamide (10-formyl THF route): step 1/1. It functions in the pathway purine metabolism; IMP biosynthesis via de novo pathway; IMP from 5-formamido-1-(5-phospho-D-ribosyl)imidazole-4-carboxamide: step 1/1. This Lactococcus lactis subsp. cremoris (strain MG1363) protein is Bifunctional purine biosynthesis protein PurH.